A 1423-amino-acid chain; its full sequence is Protein phosphatase Slingshot homolog 2 (1423 aa).

The segment at 1 to 37 (MALVTVQRSPTPSTTSSPCASEADSGEEECRSQPRSI) is disordered. Over residues 9 to 18 (SPTPSTTSSP) the composition is skewed to low complexity. Residues serine 17, serine 25, and serine 36 each carry the phosphoserine modification. One can recognise a DEK-C domain in the interval 248–303 (ERTERLIKTKLREIMMQKDLENITSKEIRTELEMQMVCNLREFKEFIDNEMIVILG). One can recognise a Tyrosine-protein phosphatase domain in the interval 307–448 (SPTQIFEHVF…LEEYQGILLA (142 aa)). Cysteine 392 (phosphocysteine intermediate) is an active-site residue. A phosphoserine mark is found at serine 461, serine 487, serine 534, serine 631, and serine 633. 10 disordered regions span residues 617 to 641 (TSPL…CQTE), 664 to 684 (QETR…GGRN), 696 to 728 (PSKV…QSKA), 797 to 825 (ENKP…MCNP), 840 to 862 (EGEP…AKWY), 877 to 954 (LRQE…NATV), 962 to 981 (FDHL…TQQE), 1019 to 1041 (TSPN…EQGL), 1070 to 1108 (SLHP…SSLS), and 1144 to 1179 (TEQS…YKDS). Positions 621–635 (KDPPMSPDPESPSPQ) are enriched in pro residues. Basic and acidic residues predominate over residues 664–680 (QETRSRSFSHSRMEELG). Residues 889-904 (TCTSLSTRKNSKNDSS) show a composition bias toward polar residues. Positions 910 to 932 (PKGKSDEAPPEHSFVLKEPEMSK) are enriched in basic and acidic residues. The segment covering 941 to 953 (EAGSLSHSEQNAT) has biased composition (polar residues). A compositionally biased stretch (polar residues) spans 1019–1034 (TSPNHTGPGSEIATSE). Residues 1144-1172 (TEQSSTTDEPSAEQVSWEESQESPLSSGS) are compositionally biased toward polar residues. At serine 1217 the chain carries Phosphoserine. Threonine 1422 is subject to Phosphothreonine.

This sequence belongs to the protein-tyrosine phosphatase family. As to quaternary structure, interacts with filamentous actin.

It is found in the cytoplasm. The protein resides in the cytoskeleton. Its subcellular location is the cell junction. It localises to the focal adhesion. The protein localises to the cytoplasmic vesicle. It is found in the secretory vesicle. The protein resides in the acrosome. It carries out the reaction O-phospho-L-tyrosyl-[protein] + H2O = L-tyrosyl-[protein] + phosphate. The catalysed reaction is O-phospho-L-seryl-[protein] + H2O = L-seryl-[protein] + phosphate. It catalyses the reaction O-phospho-L-threonyl-[protein] + H2O = L-threonyl-[protein] + phosphate. Protein phosphatase which regulates actin filament dynamics. Dephosphorylates and activates the actin binding/depolymerizing factor cofilin, which subsequently binds to actin filaments and stimulates their disassembly. Inhibitory phosphorylation of cofilin is mediated by LIMK1, which may also be dephosphorylated and inactivated by this protein. Required for spermatogenesis. Involved in acrosome biogenesis, probably by regulating cofilin-mediated actin cytoskeleton remodeling during proacrosomal vesicle fusion and/or Golgi to perinuclear vesicle trafficking. In Homo sapiens (Human), this protein is Protein phosphatase Slingshot homolog 2 (SSH2).